We begin with the raw amino-acid sequence, 252 residues long: Ribosomal RNA large subunit methyltransferase E (252 aa).

The S-adenosyl-L-methionine site is built by Gly48, Trp50, Asp68, Asp84, and Asp107. Lys147 (proton acceptor) is an active-site residue. The TRAM domain maps to 194–252; sequence PVREGDTLEVEIDNLGDEGDGVAKVDGYTLFVSGAEPGDAPEVRVTDVKPRFGFAETLE.

It belongs to the class I-like SAM-binding methyltransferase superfamily. RNA methyltransferase RlmE family.

The protein resides in the cytoplasm. It catalyses the reaction uridine(2552) in 23S rRNA + S-adenosyl-L-methionine = 2'-O-methyluridine(2552) in 23S rRNA + S-adenosyl-L-homocysteine + H(+). In terms of biological role, specifically methylates the uridine in position 2552 of 23S rRNA at the 2'-O position of the ribose in the fully assembled 50S ribosomal subunit. This is Ribosomal RNA large subunit methyltransferase E from Natronomonas pharaonis (strain ATCC 35678 / DSM 2160 / CIP 103997 / JCM 8858 / NBRC 14720 / NCIMB 2260 / Gabara) (Halobacterium pharaonis).